The following is a 23-amino-acid chain: Basic phospholipase A2 CB1 (23 aa).

As to quaternary structure, heterodimer of an acidic subunit and a basic chain. The acidic subunit is non-toxic, without enzymatic activity and comprises 3 peptides that are cross-linked by 7 disulfide bridges. The basic subunit is toxic, has phospholipase A2 activity and is composed of a single chain. Ca(2+) is required as a cofactor. Contains 7 disulfide bonds. In terms of tissue distribution, expressed by the venom gland.

Its subcellular location is the secreted. The enzyme catalyses a 1,2-diacyl-sn-glycero-3-phosphocholine + H2O = a 1-acyl-sn-glycero-3-phosphocholine + a fatty acid + H(+). Functionally, snake venom phospholipase A2 (PLA2) that shows presynaptic neurotoxicity. PLA2 catalyzes the calcium-dependent hydrolysis of the 2-acyl groups in 3-sn-phosphoglycerides. In Crotalus basiliscus (Mexican west-coast rattlesnake), this protein is Basic phospholipase A2 CB1.